The following is a 283-amino-acid chain: Formamidopyrimidine-DNA glycosylase (283 aa).

Proline 2 acts as the Schiff-base intermediate with DNA in catalysis. The active-site Proton donor is glutamate 3. The active-site Proton donor; for beta-elimination activity is lysine 60. Residues histidine 100, arginine 119, and arginine 164 each contribute to the DNA site. The FPG-type zinc-finger motif lies at 249–283 (WVYGRENKPCRKCGVKILKAKVAGRGTHWCPNCQK). Arginine 273 acts as the Proton donor; for delta-elimination activity in catalysis.

The protein belongs to the FPG family. In terms of assembly, monomer. Requires Zn(2+) as cofactor.

It carries out the reaction Hydrolysis of DNA containing ring-opened 7-methylguanine residues, releasing 2,6-diamino-4-hydroxy-5-(N-methyl)formamidopyrimidine.. The catalysed reaction is 2'-deoxyribonucleotide-(2'-deoxyribose 5'-phosphate)-2'-deoxyribonucleotide-DNA = a 3'-end 2'-deoxyribonucleotide-(2,3-dehydro-2,3-deoxyribose 5'-phosphate)-DNA + a 5'-end 5'-phospho-2'-deoxyribonucleoside-DNA + H(+). In terms of biological role, involved in base excision repair of DNA damaged by oxidation or by mutagenic agents. Acts as a DNA glycosylase that recognizes and removes damaged bases. Has a preference for oxidized purines, such as 7,8-dihydro-8-oxoguanine (8-oxoG). Has AP (apurinic/apyrimidinic) lyase activity and introduces nicks in the DNA strand. Cleaves the DNA backbone by beta-delta elimination to generate a single-strand break at the site of the removed base with both 3'- and 5'-phosphates. In Prochlorococcus marinus (strain SARG / CCMP1375 / SS120), this protein is Formamidopyrimidine-DNA glycosylase.